Consider the following 184-residue polypeptide: ATP synthase subunit b, chloroplastic (184 aa).

The chain crosses the membrane as a helical span at residues 26 to 48; it reads ILATNLINLSVVLGVLIFFGKGV.

Belongs to the ATPase B chain family. In terms of assembly, F-type ATPases have 2 components, F(1) - the catalytic core - and F(0) - the membrane proton channel. F(1) has five subunits: alpha(3), beta(3), gamma(1), delta(1), epsilon(1). F(0) has four main subunits: a(1), b(1), b'(1) and c(10-14). The alpha and beta chains form an alternating ring which encloses part of the gamma chain. F(1) is attached to F(0) by a central stalk formed by the gamma and epsilon chains, while a peripheral stalk is formed by the delta, b and b' chains.

The protein localises to the plastid. It localises to the chloroplast thylakoid membrane. Its function is as follows. F(1)F(0) ATP synthase produces ATP from ADP in the presence of a proton or sodium gradient. F-type ATPases consist of two structural domains, F(1) containing the extramembraneous catalytic core and F(0) containing the membrane proton channel, linked together by a central stalk and a peripheral stalk. During catalysis, ATP synthesis in the catalytic domain of F(1) is coupled via a rotary mechanism of the central stalk subunits to proton translocation. Functionally, component of the F(0) channel, it forms part of the peripheral stalk, linking F(1) to F(0). The chain is ATP synthase subunit b, chloroplastic from Calycanthus floridus var. glaucus (Eastern sweetshrub).